The primary structure comprises 391 residues: NADH-quinone oxidoreductase subunit D (391 aa).

It belongs to the complex I 49 kDa subunit family. As to quaternary structure, NDH-1 is composed of 14 different subunits. Subunits NuoB, C, D, E, F, and G constitute the peripheral sector of the complex.

Its subcellular location is the cell inner membrane. The catalysed reaction is a quinone + NADH + 5 H(+)(in) = a quinol + NAD(+) + 4 H(+)(out). Functionally, NDH-1 shuttles electrons from NADH, via FMN and iron-sulfur (Fe-S) centers, to quinones in the respiratory chain. The immediate electron acceptor for the enzyme in this species is believed to be ubiquinone. Couples the redox reaction to proton translocation (for every two electrons transferred, four hydrogen ions are translocated across the cytoplasmic membrane), and thus conserves the redox energy in a proton gradient. This Rickettsia canadensis (strain McKiel) protein is NADH-quinone oxidoreductase subunit D.